The chain runs to 560 residues: Hypermethylated in cancer 2 protein (560 aa).

One can recognise a BTB domain in the interval 24-87 (CDVIIVVENA…IYTGKLLSSD (64 aa)). 2 disordered regions span residues 122–163 (RSLL…KTKR) and 183–367 (HCTT…GGRN). Polar residues-rich tracts occupy residues 126–153 (NKPTTPTNGRTSRNQRLSSTPVTPNQMS) and 183–203 (HCTTSNSLSPSTSKNGSNGSC). A compositionally biased stretch (low complexity) spans 224–242 (EEVSPSSIPQESPQSASES). Positions 243 to 259 (TANSASFDENPNTQNLT) are enriched in polar residues. Positions 296 to 308 (PKSEGKKGEDMER) are enriched in basic and acidic residues. A compositionally biased stretch (low complexity) spans 348 to 362 (ENGQEQSEESGQSEN). 5 consecutive C2H2-type zinc fingers follow at residues 387 to 409 (YVCIPCGKGFPSSEELNAHVETH), 450 to 472 (FSCSVCNKSYKDPATLRQHEKTH), 478 to 500 (FPCNICGKMFTQRGTMTRHMRSH), 506 to 528 (FACEECGMRFTRQYRLTEHMRVH), and 534 to 556 (YECQLCGGKFTQQRNLISHLRMH).

Belongs to the krueppel C2H2-type zinc-finger protein family. Hic subfamily.

The protein localises to the nucleus. Its function is as follows. Transcriptional repressor. This chain is Hypermethylated in cancer 2 protein (hic2), found in Danio rerio (Zebrafish).